The sequence spans 311 residues: MAFKHKDIIGLQDLTREEIELLLNTAENLKEINERDIKKVPTLRGKTIVNLFYEASTRTRTSFEIAAKRLSADTINITASTSSVTKGETLSDTARNVLAMKPDIIVMRHAVSGAHHYLAQRVSCSVINAGDGAHEHPSQGLLDMLTMRQKFGKLDGLKVAIVGDITHSRVARSNIYGLTRMGAHVFLAGPPTMMPPGIERLGNVTVCRDMRAAITDADVVMMLRIQLERQGKTLLPTLKEYSRYFGLNNHLLQLAKKDAMVMHPGPINRGVELCSHVADGDQSHILKQVENGVAVRMSMLYHVSGGELPTE.

The carbamoyl phosphate site is built by Arg-58 and Thr-59. Lys-86 is an L-aspartate binding site. Carbamoyl phosphate-binding residues include Arg-108, His-136, and Gln-139. 2 residues coordinate L-aspartate: Arg-169 and Arg-224. Positions 265 and 266 each coordinate carbamoyl phosphate.

It belongs to the aspartate/ornithine carbamoyltransferase superfamily. ATCase family. As to quaternary structure, heterododecamer (2C3:3R2) of six catalytic PyrB chains organized as two trimers (C3), and six regulatory PyrI chains organized as three dimers (R2).

It catalyses the reaction carbamoyl phosphate + L-aspartate = N-carbamoyl-L-aspartate + phosphate + H(+). The protein operates within pyrimidine metabolism; UMP biosynthesis via de novo pathway; (S)-dihydroorotate from bicarbonate: step 2/3. In terms of biological role, catalyzes the condensation of carbamoyl phosphate and aspartate to form carbamoyl aspartate and inorganic phosphate, the committed step in the de novo pyrimidine nucleotide biosynthesis pathway. In Geotalea uraniireducens (strain Rf4) (Geobacter uraniireducens), this protein is Aspartate carbamoyltransferase catalytic subunit.